The primary structure comprises 95 residues: UPF0358 protein GK1077 (95 aa).

It belongs to the UPF0358 family.

The protein is UPF0358 protein GK1077 of Geobacillus kaustophilus (strain HTA426).